A 397-amino-acid polypeptide reads, in one-letter code: Ubiquitin-like modifier-activating enzyme 5 (397 aa).

Residues glycine 77, aspartate 98, lysine 121, asparagine 144, and asparagine 178 each coordinate ATP. Positions 220 and 223 each coordinate Zn(2+). Residue cysteine 244 is the Glycyl thioester intermediate of the active site. Residues cysteine 297 and cysteine 302 each coordinate Zn(2+). The UFM1-interacting sequence (UIS) signature appears at 329 to 341; the sequence is VVHEDNDWGIELV. The linker stretch occupies residues 342 to 372; it reads SEVSEEELKAASGPVPDLPEGIKVAYTIPIT. The UFC1-binding sequence (UFC) signature appears at 382-397; sequence DSEQSLDELMAQMKNL.

The protein belongs to the ubiquitin-activating E1 family. UBA5 subfamily. As to quaternary structure, homodimer; homodimerization is required for ufm1 activation. Interacts (via UIS motif) with ufm1; binds ufm1 via a trans-binding mechanism in which ufm1 interacts with distinct sites in both subunits of the uba5 homodimer. Interacts (via C-terminus) with ufc1.

Its subcellular location is the cytoplasm. The protein localises to the nucleus. It is found in the endoplasmic reticulum membrane. It localises to the golgi apparatus. E1-like enzyme which specifically catalyzes the first step in ufmylation. Activates ufm1 by first adenylating its C-terminal glycine residue with ATP, and thereafter linking this residue to the side chain of a cysteine residue in E1, yielding a ufm1-E1 thioester and free AMP. Activates ufm1 via a trans-binding mechanism, in which ufm1 interacts with distinct sites in both subunits of the uba5 homodimer. Trans-binding also promotes stabilization of the uba5 homodimer, and enhances ATP-binding. Transfer of ufm1 from uba5 to the E2-like enzyme UFC1 also takes place using a trans mechanism. Ufmylation plays a key role in various processes, such as ribosome recycling, response to DNA damage, interferon response or reticulophagy (also called ER-phagy). In Xenopus laevis (African clawed frog), this protein is Ubiquitin-like modifier-activating enzyme 5.